The sequence spans 99 residues: A-type ATP synthase subunit F (99 aa).

It belongs to the V-ATPase F subunit family. As to quaternary structure, has multiple subunits with at least A(3), B(3), C, D, E, F, H, I and proteolipid K(x).

It is found in the cell membrane. Component of the A-type ATP synthase that produces ATP from ADP in the presence of a proton gradient across the membrane. This is A-type ATP synthase subunit F from Methanococcoides burtonii (strain DSM 6242 / NBRC 107633 / OCM 468 / ACE-M).